The primary structure comprises 374 residues: Tetraacyldisaccharide 4'-kinase (374 aa).

ATP is bound at residue 43 to 50 (TMGGTGKT).

This sequence belongs to the LpxK family.

The enzyme catalyses a lipid A disaccharide + ATP = a lipid IVA + ADP + H(+). It participates in glycolipid biosynthesis; lipid IV(A) biosynthesis; lipid IV(A) from (3R)-3-hydroxytetradecanoyl-[acyl-carrier-protein] and UDP-N-acetyl-alpha-D-glucosamine: step 6/6. Its function is as follows. Transfers the gamma-phosphate of ATP to the 4'-position of a tetraacyldisaccharide 1-phosphate intermediate (termed DS-1-P) to form tetraacyldisaccharide 1,4'-bis-phosphate (lipid IVA). This is Tetraacyldisaccharide 4'-kinase from Leptospira biflexa serovar Patoc (strain Patoc 1 / Ames).